The primary structure comprises 218 residues: Type II restriction enzyme KpnI (218 aa).

The catalysed reaction is Endonucleolytic cleavage of DNA to give specific double-stranded fragments with terminal 5'-phosphates.. Functionally, a P subtype restriction enzyme that recognizes the double-stranded sequence 5'-GGTACC-3' and cleaves after C-5. This chain is Type II restriction enzyme KpnI, found in Klebsiella pneumoniae.